A 335-amino-acid polypeptide reads, in one-letter code: Ubiquinol oxidase 1b, mitochondrial (335 aa).

The transit peptide at methionine 1–methionine 47 directs the protein to the mitochondrion. A helical transmembrane segment spans residues alanine 160 to leucine 180. Fe cation is bound by residues glutamate 164, glutamate 203, and histidine 206. A helical membrane pass occupies residues alanine 222–serine 242. Residues glutamate 254, glutamate 305, and histidine 308 each contribute to the Fe cation site.

The protein belongs to the alternative oxidase family. The cofactor is Fe cation.

It localises to the mitochondrion inner membrane. The enzyme catalyses 2 a ubiquinol + O2 = 2 a ubiquinone + 2 H2O. Its function is as follows. Catalyzes the cyanide-resistant oxidation of ubiquinol and the reduction of molecular oxygen to water, but does not translocate protons and consequently is not linked to oxidative phosphorylation. May increase respiration when the cytochrome respiratory pathway is restricted, or in response to low temperatures. This is Ubiquinol oxidase 1b, mitochondrial from Oryza sativa subsp. japonica (Rice).